Consider the following 938-residue polypeptide: Isoleucine--tRNA ligase (938 aa).

The short motif at proline 58 to histidine 68 is the 'HIGH' region element. Glutamate 562 contacts L-isoleucyl-5'-AMP. The 'KMSKS' region signature appears at lysine 603–serine 607. Lysine 606 provides a ligand contact to ATP. Residues cysteine 901, cysteine 904, cysteine 921, and cysteine 924 each coordinate Zn(2+).

The protein belongs to the class-I aminoacyl-tRNA synthetase family. IleS type 1 subfamily. In terms of assembly, monomer. Zn(2+) is required as a cofactor.

The protein resides in the cytoplasm. It carries out the reaction tRNA(Ile) + L-isoleucine + ATP = L-isoleucyl-tRNA(Ile) + AMP + diphosphate. Functionally, catalyzes the attachment of isoleucine to tRNA(Ile). As IleRS can inadvertently accommodate and process structurally similar amino acids such as valine, to avoid such errors it has two additional distinct tRNA(Ile)-dependent editing activities. One activity is designated as 'pretransfer' editing and involves the hydrolysis of activated Val-AMP. The other activity is designated 'posttransfer' editing and involves deacylation of mischarged Val-tRNA(Ile). The sequence is that of Isoleucine--tRNA ligase from Actinobacillus pleuropneumoniae serotype 7 (strain AP76).